We begin with the raw amino-acid sequence, 333 residues long: Taste receptor type 2 member 123 (333 aa).

Over 1-14 (MFSQKTNYSHLFTF) the chain is Extracellular. Residues 15–37 (SIIFYVEIVTGILGNGFIALVNI) traverse the membrane as a helical segment. The Cytoplasmic segment spans residues 38–57 (MDWLKRRRISTADQILTALA). Residues 58–77 (LTRLIYVWSVLICILLLFLC) form a helical membrane-spanning segment. At 78–91 (PHLSMRPEMFTAIG) the chain is on the extracellular side. The chain crosses the membrane as a helical span at residues 92-114 (VIWVVDNHFSIWLATCLGVFYFL). The Cytoplasmic portion of the chain corresponds to 115-133 (KIASFSNSLFLYLKWRVKK). A helical transmembrane segment spans residues 134 to 156 (VVLMIILISLIFLMLNISSLGMY). The Extracellular portion of the chain corresponds to 157–204 (DHFSIDVYEGNMSYNLVDSTHFPRIFLFTNSSKVFLIANSSHVFLPIN). 3 N-linked (GlcNAc...) asparagine glycosylation sites follow: asparagine 167, asparagine 186, and asparagine 195. The helical transmembrane segment at 205–227 (SLFMLIPFTVSLVAFFVLFLSLW) threads the bilayer. Residues 228–250 (KHHKKMQVNAKGPRDASTMAHTK) are Cytoplasmic-facing. A helical transmembrane segment spans residues 251-273 (ALQIGFSFLLLYAIYLLFIITGI). The Extracellular portion of the chain corresponds to 274-282 (LNLDLMRCI). A helical membrane pass occupies residues 283-305 (VILLFDHISGAVFSISHSFVLIL). Residues 306–333 (GNSKLRQATLSVLPCLRCRSKDMDTVVF) lie on the Cytoplasmic side of the membrane.

Belongs to the G-protein coupled receptor T2R family. As to expression, expressed in subsets of taste receptor cells of the tongue and palate epithelium and exclusively in gustducin-positive cells. Expressed in the antrum and fundus (part of the stomach), duodenum and in gastric endocrine cells.

Its subcellular location is the membrane. In terms of biological role, gustducin-coupled receptor implicated in the perception of bitter compounds in the oral cavity and the gastrointestinal tract. Signals through PLCB2 and the calcium-regulated cation channel TRPM5. The sequence is that of Taste receptor type 2 member 123 (Tas2r123) from Rattus norvegicus (Rat).